A 191-amino-acid chain; its full sequence is Calcium-activated potassium channel subunit beta-1 (191 aa).

Topologically, residues 1-15 (MGKKLVMAQKRGETR) are cytoplasmic. The helical transmembrane segment at 16–36 (ALCLGVAMVMCAVIAYYILGT) threads the bilayer. Topologically, residues 37–157 (TMLPLYQKSV…YRRLYGPQTL (121 aa)) are extracellular. N-linked (GlcNAc...) asparagine glycans are attached at residues asparagine 80 and asparagine 142. A helical membrane pass occupies residues 158-178 (LFSLFWPTFLLTGGLLIIAMV). The Cytoplasmic portion of the chain corresponds to 179 to 191 (KINQSLSILAAQR).

Belongs to the KCNMB (TC 8.A.14.1) family. KCNMB1 subfamily. As to quaternary structure, interacts with KCNMA1 tetramer. There are probably 4 molecules of KCMNB1 per KCNMA1 tetramer. N-glycosylated.

It is found in the membrane. Regulatory subunit of the calcium activated potassium KCNMA1 (maxiK) channel. Modulates the calcium sensitivity and gating kinetics of KCNMA1, thereby contributing to KCNMA1 channel diversity. Increases the apparent Ca(2+)/voltage sensitivity of the KCNMA1 channel. It also modifies KCNMA1 channel kinetics and alters its pharmacological properties. It slows down the activation and the deactivation kinetics of the channel. Acts as a negative regulator of smooth muscle contraction by enhancing the calcium sensitivity to KCNMA1. Its presence is also a requirement for internal binding of the KCNMA1 channel opener dehydrosoyasaponin I (DHS-1) triterpene glycoside and for external binding of the agonist hormone 17-beta-estradiol (E2). Increases the binding activity of charybdotoxin (CTX) toxin to KCNMA1 peptide blocker by increasing the CTX association rate and decreasing the dissociation rate. This Canis lupus familiaris (Dog) protein is Calcium-activated potassium channel subunit beta-1 (KCNMB1).